The primary structure comprises 126 residues: Small ribosomal subunit protein bS6 (126 aa).

Residues 104 to 126 (QGAEKGKSSSKKVAAEAEASEEA) form a disordered region.

The protein belongs to the bacterial ribosomal protein bS6 family.

Its function is as follows. Binds together with bS18 to 16S ribosomal RNA. This chain is Small ribosomal subunit protein bS6, found in Coxiella burnetii (strain Dugway 5J108-111).